Here is a 538-residue protein sequence, read N- to C-terminus: NAD(P)H-quinone oxidoreductase chain 4 (538 aa).

Transmembrane regions (helical) follow at residues 11–31, 43–63, 95–115, 119–139, 143–163, 175–195, 217–237, 251–271, 285–305, 314–334, 340–360, 382–404, 425–445, and 472–492; these read FPWLSLSIFFPIVGALIVPFI, YALIIALITFLITVAAYFKGF, MPLILLTSFITSLAVLAAWPV, PKLFFFLILAMDGGQIAVFAV, LLFFLAWELELFPVYLFLAIW, FIIYTAGSSLFILLAGLAMGF, GFQLLCYSGLLIAFGVKLPIV, TAPVHMLLAGILLKMGGYALL, FAPLLIVLGVVNIIYAALTSF, IAYSSISHMGFVLIGIGSFSS, AMLQMVSHGLIGASLFFLVGA, IMFALWTACAFASLALPGMSGFI, IVVASLAAIGVILTPIYLLSM, and IYIIACLLVPIIGIGLYPKIM.

It belongs to the complex I subunit 4 family.

The protein localises to the cellular thylakoid membrane. The enzyme catalyses a plastoquinone + NADH + (n+1) H(+)(in) = a plastoquinol + NAD(+) + n H(+)(out). It catalyses the reaction a plastoquinone + NADPH + (n+1) H(+)(in) = a plastoquinol + NADP(+) + n H(+)(out). Functionally, NDH-1 shuttles electrons from NAD(P)H, via FMN and iron-sulfur (Fe-S) centers, to quinones in the respiratory chain. The immediate electron acceptor for the enzyme in this species is believed to be plastoquinone. Couples the redox reaction to proton translocation (for every two electrons transferred, four hydrogen ions are translocated across the cytoplasmic membrane), and thus conserves the redox energy in a proton gradient. This chain is NAD(P)H-quinone oxidoreductase chain 4, found in Prochlorococcus marinus (strain NATL2A).